A 318-amino-acid polypeptide reads, in one-letter code: Galactinol synthase 1 (318 aa).

Lys102 is a catalytic residue. Asp118, Asp120, and His244 together coordinate Mn(2+).

Belongs to the glycosyltransferase 8 family. Galactosyltransferase subfamily. The cofactor is a divalent metal cation. Expressed in seeds, mostly in radicle tips.

The protein resides in the cytoplasm. It carries out the reaction myo-inositol + UDP-alpha-D-galactose = alpha-D-galactosyl-(1-&gt;3)-1D-myo-inositol + UDP + H(+). Functionally, galactinol synthase involved in the biosynthesis of raffinose family oligosaccharides (RFOs) that function as osmoprotectants. May promote plant stress tolerance. In Solanum lycopersicum (Tomato), this protein is Galactinol synthase 1 (GOLS1).